Reading from the N-terminus, the 55-residue chain is Large ribosomal subunit protein bL33 (55 aa).

Belongs to the bacterial ribosomal protein bL33 family.

The sequence is that of Large ribosomal subunit protein bL33 from Bartonella quintana (strain Toulouse) (Rochalimaea quintana).